We begin with the raw amino-acid sequence, 376 residues long: MAEQGKQGGKVPFGPDYVRAISPYIAGKPISEVAREFGLDEAGIVKLASNENPLGMPESAKHAAAAAIAELGRYPDSNGFELKAALSTKLGVPQDWLTLGNGSNDILELAAHALVTPGQSIVYAEYSFAVYALATQEIGARAIVVKARDYGHDLDAMAAAITSDTRLVFIANPNNPTGTFVPAAALETFLAKVPAEVVVVLDEAYNEYLDDDQQYDSVAWVRRYPNLLVSRTFSKAYGLAGLRIGYAVAQPELTDLLNRIRQPFNVNSVAQAAAVAALGDTAFLQRSAELNRAGKAQLVEAFSRLGLEFVASSGNFVLVRVGDDDDAGARVNVALLRQGVIVRPVGNYGMPRWLRVTIGLPDENAAFIAALERALK.

Lys235 is modified (N6-(pyridoxal phosphate)lysine).

Belongs to the class-II pyridoxal-phosphate-dependent aminotransferase family. Histidinol-phosphate aminotransferase subfamily. Homodimer. Requires pyridoxal 5'-phosphate as cofactor.

It catalyses the reaction L-histidinol phosphate + 2-oxoglutarate = 3-(imidazol-4-yl)-2-oxopropyl phosphate + L-glutamate. It participates in amino-acid biosynthesis; L-histidine biosynthesis; L-histidine from 5-phospho-alpha-D-ribose 1-diphosphate: step 7/9. This chain is Histidinol-phosphate aminotransferase 1, found in Cupriavidus pinatubonensis (strain JMP 134 / LMG 1197) (Cupriavidus necator (strain JMP 134)).